Reading from the N-terminus, the 478-residue chain is JmjC domain-containing histone demethylation protein 1 (478 aa).

The PHD-type zinc-finger motif lies at 5–68; sequence SESCPLCKVH…IYHCPECVPK (64 aa). Positions 217-383 constitute a JmjC domain; it reads SDVAKLGVDF…MQLKINEIER (167 aa). Threonine 266 serves as a coordination point for substrate. Histidine 269 and aspartate 271 together coordinate Fe cation. Lysine 286 contacts substrate. Residue histidine 351 coordinates Fe cation.

It belongs to the JHDM1 histone demethylase family. Fe(2+) serves as cofactor.

The protein resides in the nucleus. It carries out the reaction N(6),N(6)-dimethyl-L-lysyl(36)-[histone H3] + 2 2-oxoglutarate + 2 O2 = L-lysyl(36)-[histone H3] + 2 formaldehyde + 2 succinate + 2 CO2. Histone demethylase that specifically demethylates 'Lys-36' of histone H3, thereby playing a central role in histone code. In Candida albicans (strain SC5314 / ATCC MYA-2876) (Yeast), this protein is JmjC domain-containing histone demethylation protein 1 (JHD1).